The sequence spans 147 residues: Myoglobin (147 aa).

Residues alanine 2–lysine 141 form the Globin domain. Histidine 60 contributes to the nitrite binding site. Residue histidine 60 participates in O2 binding. Histidine 89 contacts heme b.

This sequence belongs to the globin family. Monomeric.

It localises to the cytoplasm. The protein resides in the sarcoplasm. The catalysed reaction is Fe(III)-heme b-[protein] + nitric oxide + H2O = Fe(II)-heme b-[protein] + nitrite + 2 H(+). It carries out the reaction H2O2 + AH2 = A + 2 H2O. Its function is as follows. Monomeric heme protein which primary function is to store oxygen and facilitate its diffusion within muscle tissues. Reversibly binds oxygen through a pentacoordinated heme iron and enables its timely and efficient release as needed during periods of heightened demand. Depending on the oxidative conditions of tissues and cells, and in addition to its ability to bind oxygen, it also has a nitrite reductase activity whereby it regulates the production of bioactive nitric oxide. Under stress conditions, like hypoxia and anoxia, it also protects cells against reactive oxygen species thanks to its pseudoperoxidase activity. This Notothenia neglecta (Yellowbelly rockcod) protein is Myoglobin (mb).